The chain runs to 249 residues: MRLVSLRNATIRHSGTPALENVDFHIDRGEIVTILGPNGSGKSTLLRSIIGALPLSSGTVERAQDLRIGYVPQKLHIDPTLPLTVERFLSLPVRISKTETENALAEAGVPGLRKRQMTGLSGGQMQRVLLARALLSKPDLLILDEATQGLDQPGSAAFYQKIASVRSQIGCAVLMVSHELHVVMAASDRVICLNGHVCCEGAPAQVASAPEYQALFGSGTHGALALYRHEHDHSHDCDHDHAKDEHEHA.

An ABC transporter domain is found at methionine 1–glycine 219. ATP is bound at residue glycine 36–serine 43.

Belongs to the ABC transporter superfamily. Zinc importer (TC 3.A.1.15.5) family. The complex is composed of two ATP-binding proteins (ZnuC), two transmembrane proteins (ZnuB) and a solute-binding protein (ZnuA).

It localises to the cell inner membrane. The catalysed reaction is Zn(2+)(out) + ATP(in) + H2O(in) = Zn(2+)(in) + ADP(in) + phosphate(in) + H(+)(in). Its function is as follows. Part of the ABC transporter complex ZnuABC involved in zinc import. Responsible for energy coupling to the transport system. The sequence is that of Zinc import ATP-binding protein ZnuC from Ruegeria sp. (strain TM1040) (Silicibacter sp.).